We begin with the raw amino-acid sequence, 1405 residues long: DNA-directed RNA polymerase subunit beta' (1405 aa).

Zn(2+) contacts are provided by Cys70, Cys72, Cys85, and Cys88. Positions 460, 462, and 464 each coordinate Mg(2+). Residues Cys814, Cys888, Cys895, and Cys898 each contribute to the Zn(2+) site.

It belongs to the RNA polymerase beta' chain family. In terms of assembly, the RNAP catalytic core consists of 2 alpha, 1 beta, 1 beta' and 1 omega subunit. When a sigma factor is associated with the core the holoenzyme is formed, which can initiate transcription. Requires Mg(2+) as cofactor. Zn(2+) serves as cofactor.

It carries out the reaction RNA(n) + a ribonucleoside 5'-triphosphate = RNA(n+1) + diphosphate. Its function is as follows. DNA-dependent RNA polymerase catalyzes the transcription of DNA into RNA using the four ribonucleoside triphosphates as substrates. The chain is DNA-directed RNA polymerase subunit beta' from Shewanella sediminis (strain HAW-EB3).